The sequence spans 776 residues: FT-interacting protein 4 (776 aa).

The span at 1 to 16 (MQRPPPEDFSLKETKP) shows a compositional bias: basic and acidic residues. Positions 1–23 (MQRPPPEDFSLKETKPHLGGGKV) are disordered. C2 domains follow at residues 22-142 (KVTG…PQWY), 181-305 (VSGT…SRWF), and 346-474 (YSSD…THSY). The Ca(2+) site is built by aspartate 55, aspartate 61, aspartate 108, aspartate 110, and aspartate 115. 3 helical membrane passes run 577 to 597 (IMGV…ICVW), 608 to 628 (ILFI…FLYL), and 719 to 739 (LFVL…FQVV).

Belongs to the MCTP family. Interacts with and regulates subcellular localization and trafficking of STM. It depends on Ca(2+) as a cofactor. As to expression, highly expressed in both vegetative and inflorescence shoot apical meristems (SAMs). Accumulates in root meristems. Observed in flowers.

It is found in the endoplasmic reticulum membrane. It localises to the cytoplasm. The protein resides in the vesicle. Its subcellular location is the cell membrane. The protein localises to the endosome membrane. It is found in the golgi apparatus membrane. Its function is as follows. Required for proliferation and differentiation of shoot stem cells in the shoot apical meristem (SAM), thus determining the appropriate balance between the maintenance of shoot stem cells and their differentiation into other aboveground plant parts via the control of subcellular localization and intercellular trafficking of STM in the shoot apex. Prevents intracellular trafficking of STM to the plasma membrane in cells in the peripheral shoot meristem region thus facilitating STM recycling to the nucleus to maintain stem cells. May function as a signaling molecule by regulating the trafficking of other regulators. This Arabidopsis thaliana (Mouse-ear cress) protein is FT-interacting protein 4.